We begin with the raw amino-acid sequence, 228 residues long: tRNA (guanine-N(1)-)-methyltransferase (228 aa).

S-adenosyl-L-methionine is bound by residues glycine 111 and 130 to 135 (IGDFVL).

Belongs to the RNA methyltransferase TrmD family. As to quaternary structure, homodimer.

It localises to the cytoplasm. The catalysed reaction is guanosine(37) in tRNA + S-adenosyl-L-methionine = N(1)-methylguanosine(37) in tRNA + S-adenosyl-L-homocysteine + H(+). Its function is as follows. Specifically methylates guanosine-37 in various tRNAs. The sequence is that of tRNA (guanine-N(1)-)-methyltransferase from Ureaplasma parvum serovar 3 (strain ATCC 27815 / 27 / NCTC 11736).